A 606-amino-acid chain; its full sequence is Protein spire homolog 2 (606 aa).

A KIND domain is found at 21–219 (LSLEEVLKSY…RALFLETLEL (199 aa)). Residues 147-181 (KHCGSNAAKDEGYSGQDEEEEEEEEEEEEGAGRGI) are disordered. The segment covering 162–175 (QDEEEEEEEEEEEE) has biased composition (acidic residues). 2 WH2 domains span residues 263–277 (QLMK…LKKV) and 357–374 (LHDR…LRPV). 2 disordered regions span residues 438–464 (DEDS…RSFS) and 517–537 (CRSL…ASHG). Basic and acidic residues predominate over residues 445–464 (VDMRRVESSPTPLKRDRSFS). The tract at residues 554 to 574 (LALTVDGVINVRRILVKAEME) is spir-box.

This sequence belongs to the spire family.

Its subcellular location is the cytoplasm. The protein resides in the cytoskeleton. The protein localises to the cytosol. It is found in the cell membrane. It localises to the cytoplasmic vesicle membrane. In terms of biological role, acts as an actin nucleation factor, remains associated with the slow-growing pointed end of the new filament. Involved in intracellular vesicle transport along actin fibers, providing a novel link between actin cytoskeleton dynamics and intracellular transport. Required for asymmetric spindle positioning and asymmetric cell division during oocyte meiosis. Required for normal formation of the cleavage furrow and for polar body extrusion during female germ cell meiosis. Also acts in the nucleus: together with SPIRE1 and SPIRE2, promotes assembly of nuclear actin filaments in response to DNA damage in order to facilitate movement of chromatin and repair factors after DNA damage. The polypeptide is Protein spire homolog 2 (spire2) (Danio rerio (Zebrafish)).